A 366-amino-acid chain; its full sequence is Fructose-bisphosphate aldolase 1 (366 aa).

2 residues coordinate substrate: R56 and K147. E189 functions as the Proton acceptor in the catalytic mechanism. K231 serves as the catalytic Schiff-base intermediate with dihydroxyacetone-P.

The protein belongs to the class I fructose-bisphosphate aldolase family. In terms of tissue distribution, ubiquitous.

It catalyses the reaction beta-D-fructose 1,6-bisphosphate = D-glyceraldehyde 3-phosphate + dihydroxyacetone phosphate. The protein operates within carbohydrate degradation; glycolysis; D-glyceraldehyde 3-phosphate and glycerone phosphate from D-glucose: step 4/4. Functionally, may be involved in the metabolism of fructose-bisphosphate (beta-D-fructose 1,6-bisphosphate) and of fructose 1-phosphate. The sequence is that of Fructose-bisphosphate aldolase 1 (aldo-1) from Caenorhabditis elegans.